The following is a 208-amino-acid chain: Proteasome subunit beta 2 (208 aa).

Residues 1 to 9 (MSGKKIVSK) constitute a propeptide, removed in mature form; by autocatalysis. Thr10 serves as the catalytic Nucleophile.

This sequence belongs to the peptidase T1B family. The 20S proteasome core is composed of 14 alpha and 14 beta subunits that assemble into four stacked heptameric rings, resulting in a barrel-shaped structure. The two inner rings, each composed of seven catalytic beta subunits, are sandwiched by two outer rings, each composed of seven alpha subunits. The catalytic chamber with the active sites is on the inside of the barrel. Has a gated structure, the ends of the cylinder being occluded by the N-termini of the alpha-subunits. Is capped at one or both ends by the proteasome regulatory ATPase, PAN.

Its subcellular location is the cytoplasm. It carries out the reaction Cleavage of peptide bonds with very broad specificity.. The formation of the proteasomal ATPase PAN-20S proteasome complex, via the docking of the C-termini of PAN into the intersubunit pockets in the alpha-rings, triggers opening of the gate for substrate entry. Interconversion between the open-gate and close-gate conformations leads to a dynamic regulation of the 20S proteasome proteolysis activity. Its function is as follows. Component of the proteasome core, a large protease complex with broad specificity involved in protein degradation. This is Proteasome subunit beta 2 from Staphylothermus marinus (strain ATCC 43588 / DSM 3639 / JCM 9404 / F1).